Reading from the N-terminus, the 63-residue chain is Bowman-Birk type proteinase inhibitor (63 aa).

7 disulfide bridges follow: cysteine 7/cysteine 60, cysteine 8/cysteine 23, cysteine 11/cysteine 56, cysteine 13/cysteine 21, cysteine 30/cysteine 37, cysteine 34/cysteine 49, and cysteine 39/cysteine 47.

As to quaternary structure, monomer.

Functionally, inhibits trypsin stoichiometrically at the molar ratio of 1:2, with a dissociation constant of 4.2 nM. Does not inhibit chymotrypsin. This Lupinus albus (White lupine) protein is Bowman-Birk type proteinase inhibitor.